A 560-amino-acid chain; its full sequence is Platelet glycoprotein V (560 aa).

The N-terminal stretch at 1-16 (MLRGTLLCAVLGLLRA) is a signal peptide. The region spanning 17-50 (QPFPCPPACKCVFRDAAQCSGGDVARISALGLPT) is the LRRNT domain. Topologically, residues 17 to 523 (QPFPCPPACK…KGQDHSPFWG (507 aa)) are extracellular. Residue N51 is glycosylated (N-linked (GlcNAc...) asparagine). LRR repeat units lie at residues 75 to 96 (VLQR…TFSD), 99 to 120 (KLKT…LLDK), 123 to 144 (LLEQ…MFQK), 147 to 168 (NLQE…LFTN), 171 to 193 (NLKL…LGAQ), 195 to 216 (KLER…LLNS), 219 to 240 (ALTE…AFDR), 243 to 264 (NLSS…LFLH), 267 to 288 (NLTL…LFGE), 291 to 312 (GLQE…AFRN), 340 to 361 (ELQV…LLRG), 364 to 385 (KLRQ…LFRN), and 388 to 409 (SLES…VFGA). An N-linked (GlcNAc...) (complex) asparagine glycan is attached at N181. An N-linked (GlcNAc...) (complex) asparagine glycan is attached at N243. N-linked (GlcNAc...) asparagine glycans are attached at residues N267, N298, and N312. N-linked (GlcNAc...) asparagine glycosylation occurs at N385. Residues 421–474 (NSWRCDCGLGPFLGWLRQHLGLVGGEEPPRCAGPGAHAGLPLWALPGGDAECPG) enclose the LRRCT domain. Residues 469 to 498 (DAECPGPRGPPPRPAADSSSEAPVHPALAP) form a disordered region. Residue N499 is glycosylated (N-linked (GlcNAc...) asparagine). A helical membrane pass occupies residues 524-544 (FYFLLLAVQAMITVIIVFAMI). Residues 545-560 (KIGQLFRKLIRERALG) are Cytoplasmic-facing.

In terms of processing, the N-terminus is blocked. As to expression, platelets and megakaryocytes.

The protein resides in the membrane. Functionally, the GPIb-V-IX complex functions as the vWF receptor and mediates vWF-dependent platelet adhesion to blood vessels. The adhesion of platelets to injured vascular surfaces in the arterial circulation is a critical initiating event in hemostasis. This is Platelet glycoprotein V (GP5) from Homo sapiens (Human).